The chain runs to 224 residues: Lipoprotein-releasing system ATP-binding protein LolD (224 aa).

The ABC transporter domain occupies 4–224 (YTAKDISKNY…TLLDGSLQEE (221 aa)). 40–47 (GASGSGKT) contributes to the ATP binding site.

This sequence belongs to the ABC transporter superfamily. Lipoprotein translocase (TC 3.A.1.125) family. As to quaternary structure, the complex is composed of two ATP-binding proteins (LolD) and two transmembrane proteins (LolC and LolE).

Its subcellular location is the cell inner membrane. In terms of biological role, part of the ABC transporter complex LolCDE involved in the translocation of mature outer membrane-directed lipoproteins, from the inner membrane to the periplasmic chaperone, LolA. Responsible for the formation of the LolA-lipoprotein complex in an ATP-dependent manner. The sequence is that of Lipoprotein-releasing system ATP-binding protein LolD from Desulfotalea psychrophila (strain LSv54 / DSM 12343).